The primary structure comprises 475 residues: Ribulose bisphosphate carboxylase large chain (475 aa).

Positions 1-2 (MS) are excised as a propeptide. Residue proline 3 is modified to N-acetylproline. N6,N6,N6-trimethyllysine is present on lysine 14. Residues asparagine 123 and threonine 173 each contribute to the substrate site. The Proton acceptor role is filled by lysine 175. Lysine 177 lines the substrate pocket. Positions 201, 203, and 204 each coordinate Mg(2+). Residue lysine 201 is modified to N6-carboxylysine. Catalysis depends on histidine 294, which acts as the Proton acceptor. Residues arginine 295, histidine 327, and serine 379 each coordinate substrate.

Belongs to the RuBisCO large chain family. Type I subfamily. In terms of assembly, heterohexadecamer of 8 large chains and 8 small chains; disulfide-linked. The disulfide link is formed within the large subunit homodimers. Requires Mg(2+) as cofactor. Post-translationally, the disulfide bond which can form in the large chain dimeric partners within the hexadecamer appears to be associated with oxidative stress and protein turnover.

The protein resides in the plastid. Its subcellular location is the chloroplast. The enzyme catalyses 2 (2R)-3-phosphoglycerate + 2 H(+) = D-ribulose 1,5-bisphosphate + CO2 + H2O. The catalysed reaction is D-ribulose 1,5-bisphosphate + O2 = 2-phosphoglycolate + (2R)-3-phosphoglycerate + 2 H(+). Its function is as follows. RuBisCO catalyzes two reactions: the carboxylation of D-ribulose 1,5-bisphosphate, the primary event in carbon dioxide fixation, as well as the oxidative fragmentation of the pentose substrate in the photorespiration process. Both reactions occur simultaneously and in competition at the same active site. This is Ribulose bisphosphate carboxylase large chain from Oenothera argillicola (Appalachian evening primrose).